We begin with the raw amino-acid sequence, 313 residues long: Ribosomal RNA small subunit methyltransferase H (313 aa).

Residues 36 to 38 (GGH), Asp-56, Phe-80, Asp-102, and Gln-109 contribute to the S-adenosyl-L-methionine site.

The protein belongs to the methyltransferase superfamily. RsmH family.

It localises to the cytoplasm. It carries out the reaction cytidine(1402) in 16S rRNA + S-adenosyl-L-methionine = N(4)-methylcytidine(1402) in 16S rRNA + S-adenosyl-L-homocysteine + H(+). Specifically methylates the N4 position of cytidine in position 1402 (C1402) of 16S rRNA. The chain is Ribosomal RNA small subunit methyltransferase H from Actinobacillus pleuropneumoniae serotype 3 (strain JL03).